An 817-amino-acid chain; its full sequence is DNA replication licensing factor Mcm6 (817 aa).

The C4-type zinc finger occupies 152 to 179 (CLDCQTEIRNVEQQFKFTNPTICRNPVC). Positions 338-544 (LYQNLISSLF…VVDYAIARKI (207 aa)) constitute an MCM domain. Positions 391, 392, 393, 394, 395, and 496 each coordinate ATP. The Arginine finger signature appears at 520–523 (SRFD). Residues Arg-611 and Glu-614 each contribute to the ADP site.

This sequence belongs to the MCM family. Component of the Mcm2-7 complex. The complex forms a toroidal hexameric ring with the proposed subunit order Mcm2-Mcm6-Mcm4-Mcm7-Mcm3-Mcm5. The heterodimers of Mcm4/Mcm6 and Mcm3/Mcm5 interact with Mcm2 and Mcm7. As to expression, in stage 12 embryos, strongly expressed in the CNS and weakly in the gut.

The protein resides in the nucleus. It catalyses the reaction ATP + H2O = ADP + phosphate + H(+). In terms of biological role, acts as a component of the Mcm2-7 complex (Mcm complex) which is the putative replicative helicase essential for 'once per cell cycle' DNA replication initiation and elongation in eukaryotic cells. Core component of CDC45-MCM-GINS (CMG) helicase, the molecular machine that unwinds template DNA during replication, and around which the replisome is built. The active ATPase sites in the Mcm2-7 ring are formed through the interaction surfaces of two neighboring subunits such that a critical structure of a conserved arginine finger motif is provided in trans relative to the ATP-binding site of the Walker A box of the adjacent subunit. The six ATPase active sites, however, are likely to contribute differentially to the complex helicase activity Required for DNA replication and cell proliferation. Required for mitotic cycles, endocycles, and the special S phase associated with the amplification of chorion genes; has a role in origin unwinding or fork elongation at chorion loci. The sequence is that of DNA replication licensing factor Mcm6 from Drosophila melanogaster (Fruit fly).